The primary structure comprises 274 residues: Single-stranded DNA-binding protein WHY1, chloroplastic (274 aa).

Residues 1-54 (MSNFSLSPSPTSGFSLNLQNPTKTSYLSFSSSINTIFAPLSSNTTKSFSGLTHK) constitute a chloroplast transit peptide. Residues 100–105 (KGKAAL) are required for ssDNA binding. The Nuclear localization signal signature appears at 178–191 (KGRSDEGRVRKVLK). The segment at 253–274 (PEDASRSNNANPRSGAELEWNR) is disordered.

The protein belongs to the Whirly family. In terms of assembly, homotetramer.

It is found in the nucleus. Its subcellular location is the plastid. The protein localises to the chloroplast. Functionally, single-stranded DNA-binding protein that acts as a transcriptional activator of the pathogenesis-related gene PR-10a. Upon elicitation, binds a 30bp promoter sequence known as elicitor element response (ERE) and is required for PR-10a expression. In Solanum tuberosum (Potato), this protein is Single-stranded DNA-binding protein WHY1, chloroplastic (WHY1).